Here is a 77-residue protein sequence, read N- to C-terminus: ATP synthase subunit c (77 aa).

The next 2 helical transmembrane spans lie at 13–33 (IATVGYGLAAIGPGIGVGIVA) and 55–75 (FLGIAFSEALALIGLATYFIF).

The protein belongs to the ATPase C chain family. F-type ATPases have 2 components, F(1) - the catalytic core - and F(0) - the membrane proton channel. F(1) has five subunits: alpha(3), beta(3), gamma(1), delta(1), epsilon(1). F(0) has three main subunits: a(1), b(2) and c(10-14). The alpha and beta chains form an alternating ring which encloses part of the gamma chain. F(1) is attached to F(0) by a central stalk formed by the gamma and epsilon chains, while a peripheral stalk is formed by the delta and b chains.

The protein localises to the cell membrane. Functionally, f(1)F(0) ATP synthase produces ATP from ADP in the presence of a proton or sodium gradient. F-type ATPases consist of two structural domains, F(1) containing the extramembraneous catalytic core and F(0) containing the membrane proton channel, linked together by a central stalk and a peripheral stalk. During catalysis, ATP synthesis in the catalytic domain of F(1) is coupled via a rotary mechanism of the central stalk subunits to proton translocation. Key component of the F(0) channel; it plays a direct role in translocation across the membrane. A homomeric c-ring of between 10-14 subunits forms the central stalk rotor element with the F(1) delta and epsilon subunits. The chain is ATP synthase subunit c from Clavibacter michiganensis subsp. michiganensis (strain NCPPB 382).